The sequence spans 851 residues: MKTTKIVIASLVSLTMVSNPLLTFAATNDVIDNTTEITTDKETSSTQPTIKNTLKAGQTQSFNDWFPDDNFASEVAAAFEMQATDTISEEQLATLTSLDCHNSSITDMTGIEKLTGLTKLICTSNNITTLDLSQNTNLTYLACDSNKLTNLDVTPLTKLTYLNCDTNKLTKLDVSQNPLLTYLNCARNTLTEIDVSHNTQLTELDCHLNKKITKLDVTPQTQLTTLDCSFNKITELDVSQNKLLNRLNCDTNNITKLDLNQNIQLTFLDCSSNKLTEIDVTPLTQLTYFDCSVNPLTELDVSTLSKLTTLHCIQTDLLEIDLTHNTQLIYFQAEGCRKIKELDVTHNTQLYLLDCQAAGITELDLSQNPKLVYLYLNNTELTELDVSHNTKLKSLSCVNAHIQDFSSVGKIPALNNNFEAEGQTITMPKETLTNNSLTIAVSPDLLDQFGNPMNIEPGDGGVYDQATNTITWENLSTDNPAVTYTFTSENGAIVGTVTTPFEAPQPIKGEDVTVHYLDDKGEKLADDEVLSGNLDDPYTSSAKDIPDYTLTTTPDNATGTFTTTSQSVTYVYTKNIVAAEPVTVNYVDDTGKTLSPSEILNGNVGDTYNATAKQIDGYTLSAEPTNATGQFTSSAQTVNYIYTKNPAPEKGVVEIHYVDEDNKQLNSTTEISGTIGDNYTTEPKTIEGYTLTTTPGNATGTFTTGSQTVTYVYTKNIEAAEPITVNYVDANGKTLAPSETLNGNVGDTYKATAKQIDGYTLSAEPTNATGQFTSSAQTVNYIYTKNTNTDQPLPTKKPTNTTPTKPSNLKTTEVKKASDTLPKTGDSAPWKSALLGVFLSSTALVIWKKKK.

The signal sequence occupies residues 1–25; the sequence is MKTTKIVIASLVSLTMVSNPLLTFA. LRR repeat units lie at residues 94–115, 116–136, 137–157, 158–179, 180–200, 201–221, 222–243, 244–263, 264–284, 285–306, 316–325, 338–357, 359–368, and 380–402; these read TLTS…EKLT, GLTK…SQNT, NLTY…TPLT, KLTY…QNPL, LTYL…HNTQ, LTEL…TPQT, QLTT…QNKL, LNRL…NQNI, QLTF…TPLT, QLTY…TLSK, DLLEIDLTHN, KIKE…DCQA, GITELDLSQN, and ELTE…NAHI. MucBP domains lie at 506–568, 576–638, 647–709, and 717–779; these read PIKG…SQSV, IVAA…AQTV, APEK…SQTV, and IEAA…AQTV. The tract at residues 786 to 825 is disordered; sequence NTNTDQPLPTKKPTNTTPTKPSNLKTTEVKKASDTLPKTG. Residues 792 to 811 are compositionally biased toward low complexity; sequence PLPTKKPTNTTPTKPSNLKT. Residues 821-825 carry the LPXTG sorting signal motif; sequence LPKTG. Thr-824 is subject to Pentaglycyl murein peptidoglycan amidated threonine. A propeptide spans 825 to 851 (removed by sortase A); that stretch reads GDSAPWKSALLGVFLSSTALVIWKKKK.

The protein belongs to the internalin family. Nearly full-length mature protein and an internal LRR-containing fragment interact in vitro with human intestinal mucin-2 (MUC2) but not with mucin-1. LRR fragment binding is slightly better at pH 5.5, (the pH of the intestine) than at pH 7.4.

The protein resides in the secreted. It localises to the cell wall. With respect to regulation, despite being transcribed during bacterial growth in culture the protein is only detected in infected mice. In terms of biological role, involved in several steps of L.monocytogenes infection by both intravenous and oral infection. Probably acts as an adhesion; upon ectopic expression in L.innocula bacteria adhere better to human cell lines. The chain is Internalin J (inlJ) from Listeria monocytogenes serovar 1/2a (strain ATCC BAA-679 / EGD-e).